Here is a 354-residue protein sequence, read N- to C-terminus: MHHPLPPDDTLYDQVRPILWTGYFLKLLDQRKLPFVVEYVECHSSEDVTQAIRTLIVRGAPAIGIVAGWGAVLAAREIEAVDGIEALRKLEPALQRLHAARPTAVNLAWVLARMRRTLSAAHADWRQVMECEAESIAREDITANRCMGAYGAALIPIGSGVLTHCNTGSLATAGFGTALGVIRAGIAQGRIARVFAGETRPWLQGARLTVWELQQDGIDATLIADSAAAHLMKSGQVQWVIVGADRICANGDTANKIGTYQLAITARHHGVKFMVVASAATVDMDTTAGEAIEIEQRDPEELLGVSGVRTVAEGIAAWNPVFDVTPGALIDAIVTERGVIQSPDAAQMRATFSN.

Residues 58–60 (RGA), R101, and Q204 each bind substrate. D245 acts as the Proton donor in catalysis. 255–256 (NK) lines the substrate pocket.

This sequence belongs to the eIF-2B alpha/beta/delta subunits family. MtnA subfamily.

The enzyme catalyses 5-(methylsulfanyl)-alpha-D-ribose 1-phosphate = 5-(methylsulfanyl)-D-ribulose 1-phosphate. It functions in the pathway amino-acid biosynthesis; L-methionine biosynthesis via salvage pathway; L-methionine from S-methyl-5-thio-alpha-D-ribose 1-phosphate: step 1/6. Its function is as follows. Catalyzes the interconversion of methylthioribose-1-phosphate (MTR-1-P) into methylthioribulose-1-phosphate (MTRu-1-P). This Xylella fastidiosa (strain M12) protein is Methylthioribose-1-phosphate isomerase.